We begin with the raw amino-acid sequence, 544 residues long: L-aspartate oxidase (544 aa).

Residues 17 to 20, K39, 46 to 53, and D221 each bind FAD; these read SGGA and STFYAQGG. R288 functions as the Proton donor/acceptor in the catalytic mechanism. FAD is bound by residues E373 and 389-390; that span reads SL.

The protein belongs to the FAD-dependent oxidoreductase 2 family. NadB subfamily. Requires FAD as cofactor.

Its subcellular location is the cytoplasm. The enzyme catalyses L-aspartate + O2 = iminosuccinate + H2O2. Its pathway is cofactor biosynthesis; NAD(+) biosynthesis; iminoaspartate from L-aspartate (oxidase route): step 1/1. In terms of biological role, catalyzes the oxidation of L-aspartate to iminoaspartate, the first step in the de novo biosynthesis of NAD(+). This is L-aspartate oxidase from Acinetobacter baylyi (strain ATCC 33305 / BD413 / ADP1).